The following is a 271-amino-acid chain: 5'-AMP-activated protein kinase subunit beta-2 (271 aa).

A disordered region spans residues Met-1–Ser-46. Ser-38 is subject to Phosphoserine; by ULK1. Residue Thr-39 is modified to Phosphothreonine; by ULK1. Residue Ser-68 is modified to Phosphoserine; by ULK1. Residues Ser-94 and Ser-107 each carry the phosphoserine modification. Thr-147 carries the phosphothreonine modification. Phosphoserine is present on residues Ser-157, Ser-169, Ser-173, and Ser-183.

The protein belongs to the 5'-AMP-activated protein kinase beta subunit family. As to quaternary structure, AMPK is a heterotrimer of an alpha catalytic subunit (PRKAA1 or PRKAA2), a beta (PRKAB1 or PRKAB2) and a gamma non-catalytic subunits (PRKAG1, PRKAG2 or PRKAG3). In terms of processing, phosphorylated when associated with the catalytic subunit (PRKAA1 or PRKAA2). Phosphorylated by ULK1 and ULK2; leading to negatively regulate AMPK activity and suggesting the existence of a regulatory feedback loop between ULK1, ULK2 and AMPK.

In terms of biological role, non-catalytic subunit of AMP-activated protein kinase (AMPK), an energy sensor protein kinase that plays a key role in regulating cellular energy metabolism. In response to reduction of intracellular ATP levels, AMPK activates energy-producing pathways and inhibits energy-consuming processes: inhibits protein, carbohydrate and lipid biosynthesis, as well as cell growth and proliferation. AMPK acts via direct phosphorylation of metabolic enzymes, and by longer-term effects via phosphorylation of transcription regulators. Also acts as a regulator of cellular polarity by remodeling the actin cytoskeleton; probably by indirectly activating myosin. Beta non-catalytic subunit acts as a scaffold on which the AMPK complex assembles, via its C-terminus that bridges alpha (PRKAA1 or PRKAA2) and gamma subunits (PRKAG1, PRKAG2 or PRKAG3). The chain is 5'-AMP-activated protein kinase subunit beta-2 (Prkab2) from Mus musculus (Mouse).